We begin with the raw amino-acid sequence, 431 residues long: POU domain, class 2, transcription factor 3 (431 aa).

Disordered stretches follow at residues 1 to 39 (MVNL…RNGL), 130 to 180 (LLPQ…EPTD), and 248 to 267 (DAES…YPTL). Positions 176-250 (DEPTDLEELE…LLEKWLNDAE (75 aa)) constitute a POU-specific domain. Low complexity predominate over residues 251-267 (SSPSDPSASTPSSYPTL). The segment at residues 274 to 333 (KRKKRTSIETNIRLTLEKRFQDNPKPSSEEISMIAEQLSMEKEVVRVWFCNRRQKEKRIN) is a DNA-binding region (homeobox). Composition is skewed to low complexity over residues 352 to 364 (PSGS…VPPV), 374 to 390 (SSCS…PGSG), and 398 to 419 (ASQN…NSSG). The tract at residues 352 to 419 (PSGSLGPLSV…SSSSSFNSSG (68 aa)) is disordered.

It belongs to the POU transcription factor family. Class-2 subfamily. As to quaternary structure, interacts (via the POU domain) with POU2AF1 and POU2AF2 in a DNA-dependent manner; this interaction recruits POU2AF2 to chromatin and increases POU2F3 transactivation activity. Skin, thymus, stomach and testis.

The protein localises to the nucleus. Its function is as follows. Transcription factor that binds to the octamer motif (5'-ATTTGCAT-3'). Regulates cell type-specific differentiation pathways. Involved in the regulation of keratinocytes differentiation. The POU2F3-POU2AF2/POU2AF3 complex drives the expression of tuft-cell-specific genes, a rare chemosensory cells that coordinate immune and neural functions within mucosal epithelial tissues. This is POU domain, class 2, transcription factor 3 (Pou2f3) from Mus musculus (Mouse).